The chain runs to 554 residues: MGLCASKDSRESTHDGGPRVNRPGANDANRRNDVRKGAGDKKQDKKNKKAKGSIVNAASNINNSSSGKTKISTVSEDGTVSNGVGNTAEYDNANNKNNGNNNNSNNNDNNNNNNNNIGNNINGNNNNDSENIHDSNNSNIENKRYFNNINTGVLNGVNGNSTNSDKALSNQFDQSNNSETHSGTMTGISQALALNDSGVNGFDTDLAKRNGTVNASGGQSPGGSETVNALKVLLLGSGESGKSTVLQQLKILHQNGFSREELLEYKPFIFDNIIETGKDLAKARRTFNVQLEEDAEISESDLDELLSQQYQPTKLPCLPADLAKTLKILWNLQSTQDLLVSEHRSSFYLMDSASYFYENLDRISEPKYIPTITDVIRTRKKTSGIFDTMIDLDKNLKLHFFDVGGQRSERKKWIHCFDNVTLIIFCVSLSEYDQTLLEDNSQNRLEESLILFDSVVNSRWFARSSVVLFLNKIDIFAEKLRHVPLEKYFPDYTGGKDINKAAKYILWRFVQLNRANLNIYPHVTQATDTSNIKLVFAAIKETILENSLKDSGVL.

2 disordered regions span residues 1 to 139 (MGLC…NNSN) and 157 to 183 (VNGN…THSG). The N-myristoyl glycine moiety is linked to residue glycine 2. Residue cysteine 4 is the site of S-palmitoyl cysteine attachment. Basic and acidic residues-rich tracts occupy residues 7–17 (KDSRESTHDGG) and 28–43 (ANRR…DKKQ). The segment covering 52–66 (GSIVNAASNINNSSS) has biased composition (low complexity). Positions 67–85 (GKTKISTVSEDGTVSNGVG) are enriched in polar residues. A compositionally biased stretch (low complexity) spans 91-139 (DNANNKNNGNNNNSNNNDNNNNNNNNIGNNINGNNNNDSENIHDSNNSN). The G-alpha domain occupies 228–554 (NALKVLLLGS…ENSLKDSGVL (327 aa)). A G1 motif region spans residues 231 to 244 (KVLLLGSGESGKST). GTP-binding residues include glutamate 239, serine 240, glycine 241, lysine 242, serine 243, threonine 244, aspartate 351, isoleucine 376, threonine 382, glycine 405, asparagine 471, lysine 472, aspartate 474, and alanine 526. Mg(2+) is bound at residue serine 243. Residues 374 to 382 (DVIRTRKKT) are G2 motif. Mg(2+) is bound at residue threonine 382. A G3 motif region spans residues 398 to 407 (LHFFDVGGQR). The interval 467 to 474 (VLFLNKID) is G4 motif. A G5 motif region spans residues 524–529 (TQATDT).

The protein belongs to the G-alpha family. G proteins are composed of 3 units; alpha, beta and gamma. The alpha chain contains the guanine nucleotide binding site. Mg(2+) is required as a cofactor.

Its function is as follows. Guanine nucleotide-binding proteins (G proteins) are involved as modulators or transducers in various transmembrane signaling systems. This protein may be involved in the determination of the cAMP level according to nutritional conditions, most probably as a regulator of adenylyl cyclase. The chain is Guanine nucleotide-binding protein alpha-2 subunit (GPA2) from Kluyveromyces lactis (strain ATCC 8585 / CBS 2359 / DSM 70799 / NBRC 1267 / NRRL Y-1140 / WM37) (Yeast).